We begin with the raw amino-acid sequence, 74 residues long: Small ribosomal subunit protein bS18 (74 aa).

Belongs to the bacterial ribosomal protein bS18 family. As to quaternary structure, part of the 30S ribosomal subunit. Forms a tight heterodimer with protein bS6.

Binds as a heterodimer with protein bS6 to the central domain of the 16S rRNA, where it helps stabilize the platform of the 30S subunit. The chain is Small ribosomal subunit protein bS18 from Gloeobacter violaceus (strain ATCC 29082 / PCC 7421).